We begin with the raw amino-acid sequence, 307 residues long: Nitrogenase iron protein 2 (307 aa).

An ATP-binding site is contributed by 13–20 (GKGGIGKS). C101 lines the [4Fe-4S] cluster pocket. Position 104 is an ADP-ribosylarginine; by dinitrogenase reductase ADP-ribosyltransferase (R104). C135 is a binding site for [4Fe-4S] cluster. Residues 285 to 307 (QLTETDKAAKESEKKQEDAEGEA) form a disordered region.

The protein belongs to the NifH/BchL/ChlL family. Homodimer. [4Fe-4S] cluster serves as cofactor. In terms of processing, the reversible ADP-ribosylation of Arg-104 inactivates the nitrogenase reductase and regulates nitrogenase activity.

The enzyme catalyses N2 + 8 reduced [2Fe-2S]-[ferredoxin] + 16 ATP + 16 H2O = H2 + 8 oxidized [2Fe-2S]-[ferredoxin] + 2 NH4(+) + 16 ADP + 16 phosphate + 6 H(+). In terms of biological role, the key enzymatic reactions in nitrogen fixation are catalyzed by the nitrogenase complex, which has 2 components: the iron protein and the molybdenum-iron protein. This is Nitrogenase iron protein 2 (nifH2) from Mastigocladus laminosus (Fischerella sp.).